The following is a 493-amino-acid chain: Probable cytochrome P450 508A2 (493 aa).

The helical transmembrane segment at 1–21 (MIFGIIVYLFLIYILHNAYSK) threads the bilayer. Cys439 is a binding site for heme.

This sequence belongs to the cytochrome P450 family. It depends on heme as a cofactor.

Its subcellular location is the membrane. The chain is Probable cytochrome P450 508A2 (cyp508A2-1) from Dictyostelium discoideum (Social amoeba).